The sequence spans 252 residues: Adenosylcobinamide-GDP ribazoletransferase (252 aa).

The next 7 helical transmembrane spans lie at 35-55 (AMLP…FYIL), 58-78 (IFPA…LIGG), 113-133 (FAVL…SFII), 139-159 (YAII…FLIG), 170-190 (LFIE…MIVP), 192-212 (VLLI…IITL), and 231-251 (GANN…LLYI).

This sequence belongs to the CobS family. The cofactor is Mg(2+).

It localises to the cell membrane. It carries out the reaction alpha-ribazole + adenosylcob(III)inamide-GDP = adenosylcob(III)alamin + GMP + H(+). The catalysed reaction is alpha-ribazole 5'-phosphate + adenosylcob(III)inamide-GDP = adenosylcob(III)alamin 5'-phosphate + GMP + H(+). Its pathway is cofactor biosynthesis; adenosylcobalamin biosynthesis; adenosylcobalamin from cob(II)yrinate a,c-diamide: step 7/7. In terms of biological role, joins adenosylcobinamide-GDP and alpha-ribazole to generate adenosylcobalamin (Ado-cobalamin). Also synthesizes adenosylcobalamin 5'-phosphate from adenosylcobinamide-GDP and alpha-ribazole 5'-phosphate. This Clostridium tetani (strain Massachusetts / E88) protein is Adenosylcobinamide-GDP ribazoletransferase.